Consider the following 411-residue polypeptide: 2,3-bisphosphoglycerate-independent phosphoglycerate mutase (411 aa).

It belongs to the BPG-independent phosphoglycerate mutase family. A-PGAM subfamily.

The catalysed reaction is (2R)-2-phosphoglycerate = (2R)-3-phosphoglycerate. Its pathway is carbohydrate degradation; glycolysis; pyruvate from D-glyceraldehyde 3-phosphate: step 3/5. Catalyzes the interconversion of 2-phosphoglycerate and 3-phosphoglycerate. This chain is 2,3-bisphosphoglycerate-independent phosphoglycerate mutase, found in Pyrobaculum neutrophilum (strain DSM 2338 / JCM 9278 / NBRC 100436 / V24Sta) (Thermoproteus neutrophilus).